The primary structure comprises 137 residues: MRNWRQAENIRLYIAVGCGAAIGALLRFLSGWVIVAILGANPLWGTSFVNIVGSFIIMFFATLTGPEGRWLVSPAWRQFVMGGLCGGLTTFSSMSLDTFLLVLHGNAAFALAYLCGLVFLSLSAAMLGLIAAQRINR.

A run of 4 helical transmembrane segments spans residues Ala-20 to Ala-40, Leu-43 to Leu-63, Gly-83 to Leu-103, and Ala-110 to Ile-130. Gly-86 and Thr-89 together coordinate Na(+).

It belongs to the fluoride channel Fluc/FEX (TC 1.A.43) family.

The protein localises to the cell inner membrane. It catalyses the reaction fluoride(in) = fluoride(out). Na(+) is not transported, but it plays an essential structural role and its presence is essential for fluoride channel function. Its function is as follows. Fluoride-specific ion channel. Important for reducing fluoride concentration in the cell, thus reducing its toxicity. The sequence is that of Fluoride-specific ion channel FluC 4 from Brucella suis biovar 1 (strain 1330).